Consider the following 254-residue polypeptide: Probable transcriptional regulatory protein HDEF_0869 (254 aa).

The disordered stretch occupies residues 1–20 (MAGHSKWANTKHRKAAQDAK).

This sequence belongs to the TACO1 family.

The protein resides in the cytoplasm. The protein is Probable transcriptional regulatory protein HDEF_0869 of Hamiltonella defensa subsp. Acyrthosiphon pisum (strain 5AT).